A 349-amino-acid polypeptide reads, in one-letter code: Hepatic sodium/bile acid cotransporter (349 aa).

Over 1–22 the chain is Extracellular; sequence MEAHNASAPFNFTLPPNFGKRP. 2 N-linked (GlcNAc...) asparagine glycosylation sites follow: Asn5 and Asn11. Residues 23-44 form a helical membrane-spanning segment; sequence TDLALSVILVFMLFFIMLSLGC. The Cytoplasmic portion of the chain corresponds to 45–47; it reads TME. A helical transmembrane segment spans residues 48–83; sequence FSKIKAHLWKPKGLAIALVAQYGIMPLTAFVLGKVF. Over 84 to 86 the chain is Extracellular; that stretch reads RLK. Residues 87–112 form a discontinuously helical membrane-spanning segment; it reads NIEALAILVCGCSPGGNLSNVFSLAM. The Cytoplasmic portion of the chain corresponds to 113-115; it reads KGD. A helical membrane pass occupies residues 116 to 142; the sequence is MNLSIVMTTCSTFCALGMMPLLLYIYS. Residues 143–156 lie on the Extracellular side of the membrane; sequence RGIYDGDLKDKVPY. A helical transmembrane segment spans residues 157–179; the sequence is KGIVISLVLVLIPCTIGIVLKSK. At 180–183 the chain is on the cytoplasmic side; sequence RPQY. The chain crosses the membrane as a helical span at residues 184 to 217; sequence MRYVIKGGMIIILLCSVAVTVLSAINVGKSIMFA. At 218 to 219 the chain is on the extracellular side; sequence MT. Residues 220-243 traverse the membrane as a helical segment; the sequence is PLLIATSSLMPFIGFLLGYVLSAL. The Cytoplasmic segment spans residues 244-247; the sequence is FCLN. Residues 248–273 traverse the membrane as a discontinuously helical segment; sequence GRCRRTVSMETGCQNVQLCSTILNVA. Residues 274–280 are Extracellular-facing; the sequence is FPPEVIG. A helical transmembrane segment spans residues 281 to 311; it reads PLFFFPLLYMIFQLGEGLLLIAIFWCYEKFK. Over 312–349 the chain is Cytoplasmic; the sequence is TPKDKTKMIYTAATTEETIPGALGNGTYKGEDCSPCTA.

It belongs to the bile acid:sodium symporter (BASS) (TC 2.A.28) family. (Microbial infection) Interacts with the myristoylated pre-S1 domain of hepatitis B virus large envelope protein; myristoylation is essential for this interaction. As to expression, expressed in liver. Expressed in placental trophoblasts.

The protein resides in the cell membrane. It carries out the reaction taurocholate(out) + 2 Na(+)(out) = taurocholate(in) + 2 Na(+)(in). The catalysed reaction is cholate(out) + 2 Na(+)(out) = cholate(in) + 2 Na(+)(in). The enzyme catalyses estrone 3-sulfate(out) + 2 Na(+)(out) = estrone 3-sulfate(in) + 2 Na(+)(in). It catalyses the reaction taurochenodeoxycholate(out) + 2 Na(+)(out) = taurochenodeoxycholate(in) + 2 Na(+)(in). It carries out the reaction tauroursodeoxycholate(out) + 2 Na(+)(out) = tauroursodeoxycholate(in) + 2 Na(+)(in). The catalysed reaction is glycocholate(out) + 2 Na(+)(out) = glycocholate(in) + 2 Na(+)(in). The enzyme catalyses tauronorcholate(out) + 2 Na(+)(out) = tauronorcholate(in) + 2 Na(+)(in). It catalyses the reaction taurodeoxycholate(out) + 2 Na(+)(out) = taurodeoxycholate(in) + 2 Na(+)(in). It carries out the reaction tauroallocholate(out) + 2 Na(+)(out) = tauroallocholate(in) + 2 Na(+)(in). The catalysed reaction is taurohyodeoxycholate(out) + 2 Na(+)(out) = taurohyodeoxycholate(in) + 2 Na(+)(in). The enzyme catalyses taurohyocholate(out) + 2 Na(+)(out) = taurohyocholate(in) + 2 Na(+)(in). It catalyses the reaction tauro-beta-muricholate(out) + 2 Na(+)(out) = tauro-beta-muricholate(in) + 2 Na(+)(in). With respect to regulation, the transport of bile acids is sodium-dependent. In terms of biological role, as a major transporter of conjugated bile salts from plasma into the hepatocyte, it plays a key role in the enterohepatic circulation of bile salts necessary for the solubilization and absorption of dietary fat and fat-soluble vitamins. It is strictly dependent on the extracellular presence of sodium. It exhibits broad substrate specificity and transports various bile acids, such as taurocholate, cholate, as well as non-bile acid organic compounds, such as estrone sulfate. Works collaboratively with the ileal transporter (NTCP2), the organic solute transporter (OST), and the bile salt export pump (BSEP), to ensure efficacious biological recycling of bile acids during enterohepatic circulation. (Microbial infection) Acts as an entry receptor for hepatitis B virus (HBV). The recognition for human SLC10A1/NTCP is highly specific. In Homo sapiens (Human), this protein is Hepatic sodium/bile acid cotransporter (SLC10A1).